Consider the following 1923-residue polypeptide: Nuclear pore complex protein GP210 (1923 aa).

Residues 1–22 (MVPVSFCFFFLLLLLSAGESSS) form the signal peptide. N-linked (GlcNAc...) asparagine glycans are attached at residues asparagine 73, asparagine 117, asparagine 289, asparagine 609, asparagine 863, asparagine 903, asparagine 967, asparagine 982, asparagine 1171, asparagine 1199, asparagine 1550, asparagine 1568, and asparagine 1743. The region spanning 1152–1205 (IFLVPGASYVLTIEGGPTMNVSVDYTTVDNEVAKIEKSGRLYATSPGNTTIYAT) is the BIG2 domain. Residues 1829–1849 (SVLLKILWGVLVLVVSVIILM) form a helical membrane-spanning segment.

Belongs to the NUP210 family. Part of the nuclear pore complex (NPC). The NPC has an eight-fold symmetrical structure comprising a central transport channel and two rings, the cytoplasmic and nuclear rings, to which eight filaments are attached. The cytoplasmic filaments have loose ends, while the nuclear filaments are joined in a distal ring, forming a nuclear basket. NPCs are highly dynamic in configuration and composition, and can be devided in 3 subcomplexes, the NUP62 subcomplex, the NUP107-160 subcomplex and the NUP93 subcomplex, containing approximately 30 different nucleoporin proteins.

Its subcellular location is the nucleus envelope. The protein localises to the nucleus membrane. It localises to the nucleus. The protein resides in the nuclear pore complex. The sequence is that of Nuclear pore complex protein GP210 from Arabidopsis thaliana (Mouse-ear cress).